The sequence spans 102 residues: Large ribosomal subunit protein uL24 (102 aa).

This sequence belongs to the universal ribosomal protein uL24 family. In terms of assembly, part of the 50S ribosomal subunit.

In terms of biological role, one of two assembly initiator proteins, it binds directly to the 5'-end of the 23S rRNA, where it nucleates assembly of the 50S subunit. Functionally, one of the proteins that surrounds the polypeptide exit tunnel on the outside of the subunit. This Alkaliphilus oremlandii (strain OhILAs) (Clostridium oremlandii (strain OhILAs)) protein is Large ribosomal subunit protein uL24.